The chain runs to 260 residues: Hydroxyethylthiazole kinase 1 (260 aa).

Position 39 (Met39) interacts with substrate. 2 residues coordinate ATP: Arg115 and Thr160. Gly187 is a substrate binding site.

Belongs to the Thz kinase family. It depends on Mg(2+) as a cofactor.

The enzyme catalyses 5-(2-hydroxyethyl)-4-methylthiazole + ATP = 4-methyl-5-(2-phosphooxyethyl)-thiazole + ADP + H(+). The protein operates within cofactor biosynthesis; thiamine diphosphate biosynthesis; 4-methyl-5-(2-phosphoethyl)-thiazole from 5-(2-hydroxyethyl)-4-methylthiazole: step 1/1. In terms of biological role, catalyzes the phosphorylation of the hydroxyl group of 4-methyl-5-beta-hydroxyethylthiazole (THZ). In Streptococcus pneumoniae (strain ATCC 700669 / Spain 23F-1), this protein is Hydroxyethylthiazole kinase 1.